Reading from the N-terminus, the 111-residue chain is MMSEVKFNAYSKAIMEFEDEIKRIKKEIADDSKRLITLSDSYLSELRATAEKSLGDVQKLLNDEKKRQLDEIRNKYISEREKQLEEIRKEAEKNIDKVVNEVIRQLLGVFK.

This is an uncharacterized protein from Saccharolobus solfataricus (strain ATCC 35092 / DSM 1617 / JCM 11322 / P2) (Sulfolobus solfataricus).